Consider the following 212-residue polypeptide: Holliday junction branch migration complex subunit RuvA (212 aa).

Residues 1–66 form a domain I region; the sequence is MISGLKGTLK…ERGQKLFGFL (66 aa). The segment at 67-145 is domain II; it reads TEQDKEFFKV…KLELFLSGTS (79 aa). The flexible linker stretch occupies residues 146–162; the sequence is KEPSISLSSFSETPEEA. Positions 163 to 212 are domain III; the sequence is ALSRKREIAILGLVQLGFEEKTASKEVDKILKSSSPTDPGEIIREILKSL.

Belongs to the RuvA family. As to quaternary structure, homotetramer. Forms an RuvA(8)-RuvB(12)-Holliday junction (HJ) complex. HJ DNA is sandwiched between 2 RuvA tetramers; dsDNA enters through RuvA and exits via RuvB. An RuvB hexamer assembles on each DNA strand where it exits the tetramer. Each RuvB hexamer is contacted by two RuvA subunits (via domain III) on 2 adjacent RuvB subunits; this complex drives branch migration. In the full resolvosome a probable DNA-RuvA(4)-RuvB(12)-RuvC(2) complex forms which resolves the HJ.

It is found in the cytoplasm. In terms of biological role, the RuvA-RuvB-RuvC complex processes Holliday junction (HJ) DNA during genetic recombination and DNA repair, while the RuvA-RuvB complex plays an important role in the rescue of blocked DNA replication forks via replication fork reversal (RFR). RuvA specifically binds to HJ cruciform DNA, conferring on it an open structure. The RuvB hexamer acts as an ATP-dependent pump, pulling dsDNA into and through the RuvAB complex. HJ branch migration allows RuvC to scan DNA until it finds its consensus sequence, where it cleaves and resolves the cruciform DNA. This is Holliday junction branch migration complex subunit RuvA from Leptospira borgpetersenii serovar Hardjo-bovis (strain JB197).